The sequence spans 306 residues: MSSHPPAPRKHVTIHELRRMKESGERIAMVTAYDATAARLVAVAGVDAVLVGDSLGMAVQGHESTLPVTLDQMVYHSAMVRRGLARGDGRAHLVTDMSFGSYQASADEAVKAAMRLVAEGGAEAVKLEGGAEFGEVIRRIVRAGVPVMGHIGLTPQSVHKMGGYVVQGKDSEKAQQILRDARALEAAGCYALVLECIPSELARIVTSQLRIPTIGIGAGPHCDGQVLVLNDLLGLDASFTPRFVKRFGEVGAAVQDAVGAYVGEVKARAFPDDAHSFHSSSVRLVPVERHAEAAEEEPPDAIGAPI.

Mg(2+) is bound by residues Asp-53 and Asp-96. Residues 53 to 54, Asp-96, and Lys-126 each bind 3-methyl-2-oxobutanoate; that span reads DS. Position 128 (Glu-128) interacts with Mg(2+). Residue Glu-195 is the Proton acceptor of the active site.

This sequence belongs to the PanB family. As to quaternary structure, homodecamer; pentamer of dimers. Requires Mg(2+) as cofactor.

The protein resides in the cytoplasm. The catalysed reaction is 3-methyl-2-oxobutanoate + (6R)-5,10-methylene-5,6,7,8-tetrahydrofolate + H2O = 2-dehydropantoate + (6S)-5,6,7,8-tetrahydrofolate. Its pathway is cofactor biosynthesis; (R)-pantothenate biosynthesis; (R)-pantoate from 3-methyl-2-oxobutanoate: step 1/2. In terms of biological role, catalyzes the reversible reaction in which hydroxymethyl group from 5,10-methylenetetrahydrofolate is transferred onto alpha-ketoisovalerate to form ketopantoate. The polypeptide is 3-methyl-2-oxobutanoate hydroxymethyltransferase (Anaeromyxobacter dehalogenans (strain 2CP-1 / ATCC BAA-258)).